A 387-amino-acid polypeptide reads, in one-letter code: Chaperone protein DnaJ (387 aa).

The J domain maps to 5 to 70; sequence DYYEVLGLQK…DKKAKYDQFG (66 aa). The CR-type zinc finger occupies 144-226; that stretch reads GCEKEISITR…CKGKGTVRKN (83 aa). Cys157, Cys160, Cys174, Cys177, Cys200, Cys203, Cys214, and Cys217 together coordinate Zn(2+). CXXCXGXG motif repeat units lie at residues 157-164, 174-181, 200-207, and 214-221; these read CETCHGTG, CPKCNGSG, CDQCGGTG, and CPDCKGKG.

This sequence belongs to the DnaJ family. Homodimer. Requires Zn(2+) as cofactor.

It is found in the cytoplasm. In terms of biological role, participates actively in the response to hyperosmotic and heat shock by preventing the aggregation of stress-denatured proteins and by disaggregating proteins, also in an autonomous, DnaK-independent fashion. Unfolded proteins bind initially to DnaJ; upon interaction with the DnaJ-bound protein, DnaK hydrolyzes its bound ATP, resulting in the formation of a stable complex. GrpE releases ADP from DnaK; ATP binding to DnaK triggers the release of the substrate protein, thus completing the reaction cycle. Several rounds of ATP-dependent interactions between DnaJ, DnaK and GrpE are required for fully efficient folding. Also involved, together with DnaK and GrpE, in the DNA replication of plasmids through activation of initiation proteins. The sequence is that of Chaperone protein DnaJ from Clostridium perfringens (strain 13 / Type A).